A 46-amino-acid polypeptide reads, in one-letter code: U2-plectoxin-Pt1a (46 aa).

In terms of processing, contains 4 disulfide bonds. As to expression, expressed by the venom gland.

The protein resides in the secreted. Functionally, potent toxin that may paralyze and/or kill insect pests such as H.virescens (lepidoptera), S.exigua (beet armyworm) and M.sexta (tobacco hornworm). This is U2-plectoxin-Pt1a from Plectreurys tristis (Spider).